An 872-amino-acid chain; its full sequence is Alanine--tRNA ligase (872 aa).

Positions 567, 571, 669, and 673 each coordinate Zn(2+).

The protein belongs to the class-II aminoacyl-tRNA synthetase family. It depends on Zn(2+) as a cofactor.

It is found in the cytoplasm. The enzyme catalyses tRNA(Ala) + L-alanine + ATP = L-alanyl-tRNA(Ala) + AMP + diphosphate. Its function is as follows. Catalyzes the attachment of alanine to tRNA(Ala) in a two-step reaction: alanine is first activated by ATP to form Ala-AMP and then transferred to the acceptor end of tRNA(Ala). Also edits incorrectly charged Ser-tRNA(Ala) and Gly-tRNA(Ala) via its editing domain. This Streptococcus sanguinis (strain SK36) protein is Alanine--tRNA ligase.